The chain runs to 318 residues: Ribosomal RNA small subunit methyltransferase H (318 aa).

Residues Gly-34 to His-36, Asp-53, Phe-82, Asp-103, and Gln-110 contribute to the S-adenosyl-L-methionine site.

The protein belongs to the methyltransferase superfamily. RsmH family.

Its subcellular location is the cytoplasm. The catalysed reaction is cytidine(1402) in 16S rRNA + S-adenosyl-L-methionine = N(4)-methylcytidine(1402) in 16S rRNA + S-adenosyl-L-homocysteine + H(+). In terms of biological role, specifically methylates the N4 position of cytidine in position 1402 (C1402) of 16S rRNA. This Limosilactobacillus reuteri (strain DSM 20016) (Lactobacillus reuteri) protein is Ribosomal RNA small subunit methyltransferase H.